The primary structure comprises 343 residues: Probable dual-specificity RNA methyltransferase RlmN (343 aa).

The active-site Proton acceptor is Glu-94. Residues 100 to 330 form the Radical SAM core domain; it reads YDSRVTVCVS…ATVRMSMGSD (231 aa). An intrachain disulfide couples Cys-107 to Cys-335. [4Fe-4S] cluster contacts are provided by Cys-114, Cys-118, and Cys-121. Residues 161 to 162, Ser-193, 216 to 218, and Asn-292 each bind S-adenosyl-L-methionine; these read GE and SLH. Cys-335 (S-methylcysteine intermediate) is an active-site residue.

Belongs to the radical SAM superfamily. RlmN family. The cofactor is [4Fe-4S] cluster.

The protein localises to the cytoplasm. It carries out the reaction adenosine(2503) in 23S rRNA + 2 reduced [2Fe-2S]-[ferredoxin] + 2 S-adenosyl-L-methionine = 2-methyladenosine(2503) in 23S rRNA + 5'-deoxyadenosine + L-methionine + 2 oxidized [2Fe-2S]-[ferredoxin] + S-adenosyl-L-homocysteine. The enzyme catalyses adenosine(37) in tRNA + 2 reduced [2Fe-2S]-[ferredoxin] + 2 S-adenosyl-L-methionine = 2-methyladenosine(37) in tRNA + 5'-deoxyadenosine + L-methionine + 2 oxidized [2Fe-2S]-[ferredoxin] + S-adenosyl-L-homocysteine. Specifically methylates position 2 of adenine 2503 in 23S rRNA and position 2 of adenine 37 in tRNAs. This Clostridioides difficile (strain 630) (Peptoclostridium difficile) protein is Probable dual-specificity RNA methyltransferase RlmN.